A 209-amino-acid chain; its full sequence is Urease accessory protein UreG (209 aa).

Residue 18–25 participates in GTP binding; sequence GPVGSGKT.

The protein belongs to the SIMIBI class G3E GTPase family. UreG subfamily. Homodimer. UreD, UreF and UreG form a complex that acts as a GTP-hydrolysis-dependent molecular chaperone, activating the urease apoprotein by helping to assemble the nickel containing metallocenter of UreC. The UreE protein probably delivers the nickel.

The protein localises to the cytoplasm. Functionally, facilitates the functional incorporation of the urease nickel metallocenter. This process requires GTP hydrolysis, probably effectuated by UreG. This is Urease accessory protein UreG from Cupriavidus pinatubonensis (strain JMP 134 / LMG 1197) (Cupriavidus necator (strain JMP 134)).